We begin with the raw amino-acid sequence, 360 residues long: Uroporphyrinogen decarboxylase (360 aa).

Substrate contacts are provided by residues R31–R35, D81, Y157, T212, and H333.

It belongs to the uroporphyrinogen decarboxylase family. Homodimer.

It localises to the cytoplasm. The catalysed reaction is uroporphyrinogen III + 4 H(+) = coproporphyrinogen III + 4 CO2. The protein operates within porphyrin-containing compound metabolism; protoporphyrin-IX biosynthesis; coproporphyrinogen-III from 5-aminolevulinate: step 4/4. Functionally, catalyzes the decarboxylation of four acetate groups of uroporphyrinogen-III to yield coproporphyrinogen-III. The chain is Uroporphyrinogen decarboxylase from Herminiimonas arsenicoxydans.